A 513-amino-acid chain; its full sequence is MSDLPIINFINFNQNGTCISIGTSQGFKIFNCEPFGRFYQDDEGGCGIVEMLFSTSLLAVVGMGENPAMSPRRLRMLNTKRHSVICEVTFPTTILSIKMNKTRLAVLLQEQIYIYDISNMRLLHTIETSMNAQGLMSMSPNSENNYLVYPSPPKVINSEIKDHATTNNINIKKSDAAEDPLRKDHFAYDPSDHSHPQSTTESTSNNHNRTYSSGNNNNTNSNPNKIIKNGDVIVFNLQTLQPTMVIEAHKGEIAALKLSADGTLLATASEKGTIIRVFNVENGSKVYQFRRGTYSTKISSLSFSKDNQFLAVCSSSKTVHIFKLGEKIIDNTKPNELNSDDDMDDDLLPQFENGDDEEEVDEETLDEEATSLNSSHSNKEPIVDSSRSTVGRMIRKSSQRLSRKAAKTLGAYFPIKVSSILEPSRHFASLKISTTTNQPIKAIAAIDDPISLNTNEYPDLFDTSNQADHQNTDGLKMIPVRVLSSEGYMYKYILDPERGGDCILLEQYSLLSE.

A WD 1 repeat occupies 2–40; it reads SDLPIINFINFNQNGTCISIGTSQGFKIFNCEPFGRFYQ. Positions 167–225 are disordered; sequence NNINIKKSDAAEDPLRKDHFAYDPSDHSHPQSTTESTSNNHNRTYSSGNNNNTNSNPNK. Over residues 172-195 the composition is skewed to basic and acidic residues; sequence KKSDAAEDPLRKDHFAYDPSDHSH. Over residues 205–225 the composition is skewed to low complexity; sequence NNHNRTYSSGNNNNTNSNPNK. The stretch at 248-288 is one WD 2 repeat; sequence AHKGEIAALKLSADGTLLATASEKGTIIRVFNVENGSKVYQ. The interval 289–292 is necessary for proper localization to vacuole membrane; it reads FRRG. Residues 289–293 carry the L/FRRG motif motif; that stretch reads FRRGT. A WD 3 repeat occupies 293–332; sequence TYSTKISSLSFSKDNQFLAVCSSSKTVHIFKLGEKIIDNT. The disordered stretch occupies residues 333–398; it reads KPNELNSDDD…TVGRMIRKSS (66 aa). Acidic residues predominate over residues 338 to 369; it reads NSDDDMDDDLLPQFENGDDEEEVDEETLDEEA.

Belongs to the WD repeat PROPPIN family. In terms of assembly, component of the PI(3,5)P2 regulatory complex. Interacts with ATG2 and ATG9. The ATG2-ATG18 complex is essential for autophagosome formation.

It is found in the preautophagosomal structure membrane. The protein localises to the vacuole membrane. Its subcellular location is the endosome membrane. In terms of biological role, component of the PI(3,5)P2 regulatory complex that regulates both the synthesis and turnover of phosphatidylinositol 3,5-bisphosphate (PtdIns(3,5)P2). Plays an important role in osmotically-induced vacuole fragmentation. Required for cytoplasm to vacuole transport (Cvt) vesicle formation, pexophagy and starvation-induced autophagy. Involved in correct ATG9 trafficking to the pre-autophagosomal structure. With ATG2, protects ATG8 from ATG4-mediated cleavage. This is Autophagy-related protein 18 from Kluyveromyces marxianus (strain DMKU3-1042 / BCC 29191 / NBRC 104275) (Yeast).